Consider the following 315-residue polypeptide: Calumenin (315 aa).

The N-terminal stretch at 1 to 19 (MDLRQFLLCLSLCTAFALS) is a signal peptide. Tyr-47 is subject to Phosphotyrosine. The residue at position 65 (Thr-65) is a Phosphothreonine. EF-hand domains lie at 68-103 (ESKE…AQKR), 104-139 (WIHE…YVLD), 151-186 (QMMV…DEYD), 188-223 (MKDI…HDGN), 229-264 (WVKT…SDYD), and 265-300 (HAEA…FVGS). Phosphoserine is present on Ser-69. Residues Asp-81, Asp-83, Asp-85, Glu-92, Asp-117, Asn-119, Asp-121, and Glu-128 each contribute to the Ca(2+) site. Asn-131 carries N-linked (GlcNAc...) asparagine glycosylation. Asp-164 contributes to the Ca(2+) binding site. Lys-165 bears the N6-acetyllysine mark. Asp-166, Asp-168, Glu-175, Asp-201, Asn-203, Asp-205, Glu-212, Asp-242, Asn-244, Asp-246, Arg-248, and Glu-253 together coordinate Ca(2+). Phosphothreonine is present on Thr-254. 2 positions are modified to phosphoserine: Ser-261 and Ser-277. Asp-278, Asn-280, Asp-282, Lys-284, and Glu-289 together coordinate Ca(2+). A Prevents secretion from ER motif is present at residues 312-315 (HDEF).

This sequence belongs to the CREC family. As to quaternary structure, interacts with GGCX.

The protein localises to the endoplasmic reticulum membrane. The protein resides in the golgi apparatus. It localises to the secreted. Its subcellular location is the melanosome. It is found in the sarcoplasmic reticulum lumen. Its function is as follows. Involved in regulation of vitamin K-dependent carboxylation of multiple N-terminal glutamate residues. Seems to inhibit gamma-carboxylase GGCX. Binds 7 calcium ions with a low affinity. This is Calumenin (CALU) from Mesocricetus auratus (Golden hamster).